A 636-amino-acid chain; its full sequence is MINITTSFPNKTAAAFHKHVTGSEVASAMFPEIAESIVALFVDGNLQDLATPISKDGSVDPVTIESNTGMDIIRHDAAHIMARAVREIFPDTKLAIGPTIENGFYYDFDLSHSLSEKDFEAIERKMADIIAKDERFVREVWPRERAIKFFEDLGEHYKLEILSKVPLGEEITVYKHGEFVDLCRGPHAPSARYVKAFKLTKISGAYWLGDQKNKMLQRVYGTAWHSSEALASYIHNMQEAEKRDHRKIAKDLGWFHIQNEALGQVFWHDKGWVIYRIIEEYIRCKLKKHGYHEVKTPIMLDRKLWEKSGHWEKFKENMFVVEDDKKELAIKPMNCPCHVQIFKSKIRSYKELPIRMAEFGMCHRNEPSGSLYGLMRVRGFTQDDAHIFCTHEQVRDEVLRFYELLMEVYKDFGFDSVTVKLSDRPENRIGSDEIWDRSEQSLMEPMNALGVQYTINKGEGAFYGPKLEFTLKDSIGREWQCGTVQLDFVLPDRLGAYYIGEDGKKHIPVIIHRAILGTIERFIGILIEHYAGNIPAWLAPVQLEILTVSGEVAEYARDLAEMASQENVRVELNAAEENISHKIRKAIFNKVPIVWVVGKSEAGDRGVSVRRYGSGETCRMAAGKALKTLLTCVSMR.

Residues 1-63 (MINITTSFPN…SKDGSVDPVT (63 aa)) form the TGS domain. Residues 244–535 (DHRKIAKDLG…LIEHYAGNIP (292 aa)) are catalytic. Zn(2+) contacts are provided by Cys-335, His-386, and His-512.

This sequence belongs to the class-II aminoacyl-tRNA synthetase family. In terms of assembly, homodimer. Zn(2+) is required as a cofactor.

The protein localises to the cytoplasm. The catalysed reaction is tRNA(Thr) + L-threonine + ATP = L-threonyl-tRNA(Thr) + AMP + diphosphate + H(+). In terms of biological role, catalyzes the attachment of threonine to tRNA(Thr) in a two-step reaction: L-threonine is first activated by ATP to form Thr-AMP and then transferred to the acceptor end of tRNA(Thr). Also edits incorrectly charged L-seryl-tRNA(Thr). This Anaplasma marginale (strain St. Maries) protein is Threonine--tRNA ligase.